The chain runs to 539 residues: Dopamine receptor 2 (539 aa).

Over 1-113 the chain is Extracellular; that stretch reads MVDDNGSSPE…LPNDRVGLLA (113 aa). Asn-5, Asn-31, Asn-47, and Asn-68 each carry an N-linked (GlcNAc...) asparagine glycan. Residues 114–134 form a helical membrane-spanning segment; the sequence is FLFLFSFATVFGNSLVILAVI. The Cytoplasmic portion of the chain corresponds to 135 to 145; sequence RERYLHTATNY. A helical transmembrane segment spans residues 146–166; that stretch reads FITSLAVADCLVGLVVMPFSA. Residues 167–189 are Extracellular-facing; that stretch reads LYEVLENTWFFGTDWCDIWRSLD. Cysteines 182 and 261 form a disulfide. Residues 190 to 206 traverse the membrane as a helical segment; that stretch reads VLFSTASILNLCVISLD. The Cytoplasmic portion of the chain corresponds to 207-227; the sequence is RYWAITDPFSYPMRMTVKRAA. A helical membrane pass occupies residues 228–248; it reads GLIAAVWICSSAISFPAIVWW. Over 249 to 266 the chain is Extracellular; sequence RAARDGEMPAYKCTFTEH. Residues 267–287 form a helical membrane-spanning segment; the sequence is LGYLVFSSTISFYLPLLVMVF. Topologically, residues 288-420 are cytoplasmic; that stretch reads TYCRIYRAAV…FAKEKKAAKT (133 aa). The tract at residues 326-387 is disordered; it reads GGTTRDQQNQ…EPDDEPLSAL (62 aa). The span at 337-352 shows a compositional bias: gly residues; sequence SGGGGGGGGGGGGGGS. A compositionally biased stretch (basic residues) spans 356–367; it reads SHSHSHHHHHNH. A helical membrane pass occupies residues 421–441; the sequence is LGIVMGVFIICWLPFFVVNLL. Topologically, residues 442 to 453 are extracellular; the sequence is SGFCIECIEHEE. The chain crosses the membrane as a helical span at residues 454-474; it reads IVSAIVTWLGWINSCMNPVIY. Residues 475-539 lie on the Cytoplasmic side of the membrane; sequence ACWSRDFRRA…RHNSCEQTYI (65 aa). 2 S-palmitoyl cysteine lipidation sites follow: Cys-492 and Cys-493.

It belongs to the G-protein coupled receptor 1 family. Expressed in both central and peripheral nervous systems.

The protein localises to the cell membrane. Its function is as follows. Receptor for dopamine. The activity of this receptor is mediated by G proteins which activate adenylyl cyclase. Also capable of generating a calcium signal. In terms of antagonist responses, would be classed with the D1-like dopamine receptor group. This receptor is an attractive candidate for initiating biochemical cascades underlying olfactory learning. The protein is Dopamine receptor 2 (Dop1R2) of Drosophila melanogaster (Fruit fly).